The following is a 390-amino-acid chain: Elongation factor Tu 2 (390 aa).

One can recognise a tr-type G domain in the interval 10-203; it reads KPHLNIGTMG…AVDTYVPMPE (194 aa). A G1 region spans residues 19–26; sequence GHVDHGKT. 19-26 is a GTP binding site; it reads GHVDHGKT. Position 26 (Thr26) interacts with Mg(2+). A G2 region spans residues 60–64; that stretch reads GITIN. The segment at 81–84 is G3; the sequence is DMPG. Residues 81-85 and 136-139 contribute to the GTP site; these read DMPGH and NKAD. The interval 136–139 is G4; it reads NKAD. A G5 region spans residues 173 to 175; it reads SGL.

Belongs to the TRAFAC class translation factor GTPase superfamily. Classic translation factor GTPase family. EF-Tu/EF-1A subfamily. As to quaternary structure, monomer.

It localises to the cytoplasm. The enzyme catalyses GTP + H2O = GDP + phosphate + H(+). In terms of biological role, GTP hydrolase that promotes the GTP-dependent binding of aminoacyl-tRNA to the A-site of ribosomes during protein biosynthesis. The polypeptide is Elongation factor Tu 2 (Streptomyces avermitilis (strain ATCC 31267 / DSM 46492 / JCM 5070 / NBRC 14893 / NCIMB 12804 / NRRL 8165 / MA-4680)).